The primary structure comprises 361 residues: Peptide chain release factor 1 (361 aa).

An N5-methylglutamine modification is found at Gln236. Basic and acidic residues predominate over residues 285–309; that stretch reads TAKDSARAADRKAQVGSGDRSERIR. Positions 285 to 313 are disordered; it reads TAKDSARAADRKAQVGSGDRSERIRTYNF.

It belongs to the prokaryotic/mitochondrial release factor family. In terms of processing, methylated by PrmC. Methylation increases the termination efficiency of RF1.

Its subcellular location is the cytoplasm. Its function is as follows. Peptide chain release factor 1 directs the termination of translation in response to the peptide chain termination codons UAG and UAA. The sequence is that of Peptide chain release factor 1 from Methylorubrum populi (strain ATCC BAA-705 / NCIMB 13946 / BJ001) (Methylobacterium populi).